Reading from the N-terminus, the 325-residue chain is GMP reductase (325 aa).

The Thioimidate intermediate role is filled by C174. Residue 203–226 (IIADGGIRTHGDIAKSVRFGATMV) participates in NADP(+) binding.

The protein belongs to the IMPDH/GMPR family. GuaC type 2 subfamily.

The catalysed reaction is IMP + NH4(+) + NADP(+) = GMP + NADPH + 2 H(+). In terms of biological role, catalyzes the irreversible NADPH-dependent deamination of GMP to IMP. It functions in the conversion of nucleobase, nucleoside and nucleotide derivatives of G to A nucleotides, and in maintaining the intracellular balance of A and G nucleotides. The polypeptide is GMP reductase (Enterococcus faecalis (strain ATCC 700802 / V583)).